We begin with the raw amino-acid sequence, 217 residues long: MIQLPDEINLIIVLSLLTLLPLISVMATSFVKFAVVFSLLRNALGVQQIPPNMAMYGLAIILSLYVMAPVGFATQDYLQANEVSLTNIESVEKFFDEGLAPYRMFLKQHIQAQEYSFFVDSTKQLWPKQYADRLESDSLFILLPAFTVSELTRAFEIGFLIYLPFIVIDLVISNILLAMGMMMVSPMTISLPFKLLLFVLLDGWTRLTHGLVISYGG.

4 helical membrane passes run 11-31, 53-73, 157-177, and 181-201; these read IIVLSLLTLLPLISVMATSFV, MAMYGLAIILSLYVMAPVGFA, IGFLIYLPFIVIDLVISNILL, and MMMVSPMTISLPFKLLLFVLL.

It belongs to the FliP/MopC/SpaP family.

It localises to the cell membrane. Its function is as follows. Component of the yop secretion machinery. May have a role in the negative pathway regulation of yop expression controlled by calcium. This Yersinia pestis protein is Yop proteins translocation protein R (yscR).